Reading from the N-terminus, the 129-residue chain is MSNIPTELKYASSHEWIRKEEDGSYTVGITEHAQELLGDMVFVELPEVGDTVTAGNDCAVAESVKAASDIYAPISGEVIAVNEALEDSPELVNSDAYGEGWFFRVMPSDESEVDALLDAEGYQAVIDEE.

The Lipoyl-binding domain maps to 24–106 (SYTVGITEHA…YGEGWFFRVM (83 aa)). The residue at position 65 (lysine 65) is an N6-lipoyllysine.

This sequence belongs to the GcvH family. As to quaternary structure, the glycine cleavage system is composed of four proteins: P, T, L and H. The cofactor is (R)-lipoate.

In terms of biological role, the glycine cleavage system catalyzes the degradation of glycine. The H protein shuttles the methylamine group of glycine from the P protein to the T protein. This is Glycine cleavage system H protein from Shewanella sp. (strain MR-7).